A 355-amino-acid polypeptide reads, in one-letter code: Probable cinnamyl alcohol dehydrogenase (355 aa).

Residue Cys-47 coordinates Zn(2+). Ser-49 serves as a coordination point for NADP(+). Zn(2+)-binding residues include His-69, Glu-70, Cys-100, Cys-103, Cys-106, Cys-114, and Cys-162. Residues Thr-166, 187–192, 210–215, Thr-250, Gly-274, and 297–299 each bind NADP(+); these read GLGGVG, SSSDKK, and SFI.

Belongs to the zinc-containing alcohol dehydrogenase family. As to quaternary structure, homodimer. Zn(2+) serves as cofactor.

The enzyme catalyses (E)-cinnamyl alcohol + NADP(+) = (E)-cinnamaldehyde + NADPH + H(+). The catalysed reaction is (E)-coniferol + NADP(+) = (E)-coniferaldehyde + NADPH + H(+). It catalyses the reaction (E)-sinapyl alcohol + NADP(+) = (E)-sinapaldehyde + NADPH + H(+). It carries out the reaction (E)-4-coumaroyl alcohol + NADP(+) = (E)-4-coumaraldehyde + NADPH + H(+). The enzyme catalyses (E)-caffeyl alcohol + NADP(+) = (E)-caffeyl aldehyde + NADPH + H(+). It functions in the pathway aromatic compound metabolism; phenylpropanoid biosynthesis. In terms of biological role, involved in lignin biosynthesis. Catalyzes the final step specific for the production of lignin monomers. Catalyzes the NADPH-dependent reduction of coniferaldehyde, 5-hydroxyconiferaldehyde, sinapaldehyde, 4-coumaraldehyde and caffeyl aldehyde to their respective alcohols. This chain is Probable cinnamyl alcohol dehydrogenase (CAD1), found in Eucalyptus botryoides (Southern mahogany).